The chain runs to 207 residues: Imidazoleglycerol-phosphate dehydratase (207 aa).

This sequence belongs to the imidazoleglycerol-phosphate dehydratase family.

Its subcellular location is the cytoplasm. The catalysed reaction is D-erythro-1-(imidazol-4-yl)glycerol 3-phosphate = 3-(imidazol-4-yl)-2-oxopropyl phosphate + H2O. The protein operates within amino-acid biosynthesis; L-histidine biosynthesis; L-histidine from 5-phospho-alpha-D-ribose 1-diphosphate: step 6/9. This Mycobacterium avium (strain 104) protein is Imidazoleglycerol-phosphate dehydratase.